The sequence spans 254 residues: Triosephosphate isomerase (254 aa).

12 to 14 serves as a coordination point for substrate; that stretch reads NWK. His-99 serves as the catalytic Electrophile. Residue Glu-169 is the Proton acceptor of the active site. Residues Gly-175, Ser-214, and 235–236 contribute to the substrate site; that span reads GG.

The protein belongs to the triosephosphate isomerase family. As to quaternary structure, homodimer.

It is found in the cytoplasm. It carries out the reaction D-glyceraldehyde 3-phosphate = dihydroxyacetone phosphate. The protein operates within carbohydrate biosynthesis; gluconeogenesis. It functions in the pathway carbohydrate degradation; glycolysis; D-glyceraldehyde 3-phosphate from glycerone phosphate: step 1/1. Functionally, involved in the gluconeogenesis. Catalyzes stereospecifically the conversion of dihydroxyacetone phosphate (DHAP) to D-glyceraldehyde-3-phosphate (G3P). The polypeptide is Triosephosphate isomerase (Bartonella henselae (strain ATCC 49882 / DSM 28221 / CCUG 30454 / Houston 1) (Rochalimaea henselae)).